Reading from the N-terminus, the 292-residue chain is Glycine--tRNA ligase alpha subunit (292 aa).

The protein belongs to the class-II aminoacyl-tRNA synthetase family. In terms of assembly, tetramer of two alpha and two beta subunits.

It localises to the cytoplasm. The catalysed reaction is tRNA(Gly) + glycine + ATP = glycyl-tRNA(Gly) + AMP + diphosphate. This Geobacter sulfurreducens (strain ATCC 51573 / DSM 12127 / PCA) protein is Glycine--tRNA ligase alpha subunit.